A 407-amino-acid chain; its full sequence is ATP phosphoribosyltransferase regulatory subunit (407 aa).

The protein belongs to the class-II aminoacyl-tRNA synthetase family. HisZ subfamily. As to quaternary structure, heteromultimer composed of HisG and HisZ subunits.

The protein resides in the cytoplasm. It functions in the pathway amino-acid biosynthesis; L-histidine biosynthesis; L-histidine from 5-phospho-alpha-D-ribose 1-diphosphate: step 1/9. Functionally, required for the first step of histidine biosynthesis. May allow the feedback regulation of ATP phosphoribosyltransferase activity by histidine. In Rippkaea orientalis (strain PCC 8801 / RF-1) (Cyanothece sp. (strain PCC 8801)), this protein is ATP phosphoribosyltransferase regulatory subunit.